Here is a 478-residue protein sequence, read N- to C-terminus: Shikimate biosynthesis protein AroDE (478 aa).

Positions 1–208 (MLCTTISGPS…LKHHYFYNFA (208 aa)) are 3-dehydroquinate dehydratase. 3-dehydroquinate contacts are provided by residues serine 21, 29–31 (EMR), and 55–57 (AWK). Histidine 110 (proton donor/acceptor; for 3-dehydroquinate dehydratase activity) is an active-site residue. The active-site Schiff-base intermediate with substrate; for 3-dehydroquinate dehydratase activity is the lysine 133. 3-dehydroquinate is bound by residues arginine 171 and glutamine 196. The tract at residues 209 to 478 (SLSAQSPICA…VLASLFSIAP (270 aa)) is shikimate 5-dehydrogenase. 226-228 (SIG) contributes to the shikimate binding site. The active-site Proton acceptor; for shikimate dehydrogenase activity is the lysine 277. Shikimate is bound by residues asparagine 298 and aspartate 313. Residues 337–341 (GAGGA), 360–362 (NRT), and glycine 435 contribute to the NADP(+) site. Glutamine 442 contacts shikimate.

It in the N-terminal section; belongs to the type-I 3-dehydroquinase family. The protein in the C-terminal section; belongs to the shikimate dehydrogenase family.

It carries out the reaction 3-dehydroquinate = 3-dehydroshikimate + H2O. It catalyses the reaction shikimate + NADP(+) = 3-dehydroshikimate + NADPH + H(+). Its pathway is metabolic intermediate biosynthesis; chorismate biosynthesis; chorismate from D-erythrose 4-phosphate and phosphoenolpyruvate: step 3/7. It participates in metabolic intermediate biosynthesis; chorismate biosynthesis; chorismate from D-erythrose 4-phosphate and phosphoenolpyruvate: step 4/7. Its function is as follows. Bifunctional enzyme that catalyzes two sequential steps of the aromatic amino acids biosynthetic pathway. In the first reaction, the AroD domain catalyzes the cis-dehydration of 3-dehydroquinate (DHQ) and introduces the first double bond of the aromatic ring to yield 3-dehydroshikimate; in the second reaction, the AroE domain catalyzes the reversible NADPH linked reduction of 3-dehydroshikimate (DHSA) to yield shikimate (SA). The protein is Shikimate biosynthesis protein AroDE of Chlamydia trachomatis serovar D (strain ATCC VR-885 / DSM 19411 / UW-3/Cx).